A 280-amino-acid chain; its full sequence is ATP synthase gamma chain (280 aa).

It belongs to the ATPase gamma chain family. F-type ATPases have 2 components, CF(1) - the catalytic core - and CF(0) - the membrane proton channel. CF(1) has five subunits: alpha(3), beta(3), gamma(1), delta(1), epsilon(1). CF(0) has three main subunits: a, b and c.

The protein localises to the cell membrane. Functionally, produces ATP from ADP in the presence of a proton gradient across the membrane. The gamma chain is believed to be important in regulating ATPase activity and the flow of protons through the CF(0) complex. The protein is ATP synthase gamma chain of Mycoplasma mycoides subsp. mycoides SC (strain CCUG 32753 / NCTC 10114 / PG1).